A 291-amino-acid polypeptide reads, in one-letter code: Geranyl diphosphate 2-C-methyltransferase (291 aa).

It belongs to the geranyl diphosphate 2-C-methyltransferase family. It depends on Mg(2+) as a cofactor.

It carries out the reaction (2E)-geranyl diphosphate + S-adenosyl-L-methionine = (E)-2-methylgeranyl diphosphate + S-adenosyl-L-homocysteine + H(+). In terms of biological role, catalyzes the SAM-dependent methylation of geranyl diphosphate (GPP) to yield (E)-2-methylgeranyl diphosphate (2-MeGPP). In Streptomyces ambofaciens (strain ATCC 23877 / 3486 / DSM 40053 / JCM 4204 / NBRC 12836 / NRRL B-2516), this protein is Geranyl diphosphate 2-C-methyltransferase.